A 395-amino-acid chain; its full sequence is Zinc finger protein 200 (395 aa).

The segment at 157–208 is disordered; the sequence is VNGSNPEGEDPEREPVENEDYREKSSDDDEMDSSLVSQQPPDNQEKERLNTS. Residues 169–181 show a composition bias toward basic and acidic residues; sequence REPVENEDYREKS. An interaction with PRMT3 region spans residues 246-395; sequence RRTRRWYTCP…HSACKTRKQK (150 aa). 5 consecutive C2H2-type zinc fingers follow at residues 252–274, 280–302, 308–330, 336–358, and 364–386; these read YTCPLCGKQFNESSYLISHQRTH, YDCNHCGKSFNHKTNLNKHERIH, YSCSQCGKNFRQNSHRSRHEGIH, FKCPECGKTFPKNEEFVLHLQSH, and YGCKKCGRRFGRLSNCTRHEKTH.

Interacts (via C-terminus) with PRMT3 (via zinc-finger); the interaction is direct and required to localize protein arginine N-methyltransferase PRMT3 to the nucleus and inhibit its proteasomal degradation. As to expression, highly expressed in testis, weakly expressed in spleen, thymus, prostate, ovary, small intestine colon and peripheral blood leukocytes.

It is found in the nucleus. Its function is as follows. Localizes protein arginine N-methyltransferase PRMT3 to the nucleus. The chain is Zinc finger protein 200 (ZNF200) from Homo sapiens (Human).